Consider the following 47-residue polypeptide: Boigatoxin-A (47 aa).

Residue glutamine 1 is modified to Pyrrolidone carboxylic acid. Cystine bridges form between cysteine 10-cysteine 34 and cysteine 13-cysteine 21.

As to quaternary structure, monomer. Expressed by the venom gland.

It is found in the secreted. This toxin may inhibit nicotinic acetylcholine receptor (nAChR). It has poorly reversible postsynaptic blocking activity in a chick muscle preparation and readily reversible inhibitory activity at a presynaptic site in the rat vas deferens prostatic segment most likely to prevent the release of neurotransmitters. The chain is Boigatoxin-A from Boiga dendrophila (Mangrove snake).